The primary structure comprises 157 residues: Ribosomal RNA large subunit methyltransferase H (157 aa).

Residues Leu74, Gly106, and 125–130 each bind S-adenosyl-L-methionine; that span reads LGNITF.

It belongs to the RNA methyltransferase RlmH family. Homodimer.

Its subcellular location is the cytoplasm. The enzyme catalyses pseudouridine(1915) in 23S rRNA + S-adenosyl-L-methionine = N(3)-methylpseudouridine(1915) in 23S rRNA + S-adenosyl-L-homocysteine + H(+). Its function is as follows. Specifically methylates the pseudouridine at position 1915 (m3Psi1915) in 23S rRNA. In Lawsonia intracellularis (strain PHE/MN1-00), this protein is Ribosomal RNA large subunit methyltransferase H.